Reading from the N-terminus, the 98-residue chain is DNA/RNA-binding protein Alba (98 aa).

An N6-acetyllysine modification is found at Lys16.

This sequence belongs to the histone-like Alba family. Post-translationally, acetylated. Acetylation at Lys-16 decreases DNA-binding affinity.

The protein localises to the cytoplasm. It localises to the chromosome. Functionally, binds double-stranded DNA tightly but without sequence specificity. Involved in DNA compaction. The protein is DNA/RNA-binding protein Alba of Metallosphaera sedula (strain ATCC 51363 / DSM 5348 / JCM 9185 / NBRC 15509 / TH2).